Here is a 186-residue protein sequence, read N- to C-terminus: Large ribosomal subunit protein uL22 (186 aa).

2 stretches are compositionally biased toward basic and acidic residues: residues 157–167 (VSKATDDEPTK) and 177–186 (RQKEKMLRSE). The segment at 157 to 186 (VSKATDDEPTKKKLSKKKLQRQKEKMLRSE) is disordered.

This sequence belongs to the universal ribosomal protein uL22 family.

This is Large ribosomal subunit protein uL22 (RpL17) from Drosophila yakuba (Fruit fly).